A 1368-amino-acid polypeptide reads, in one-letter code: DNA-directed RNA polymerase subunit beta (1368 aa).

The protein belongs to the RNA polymerase beta chain family. As to quaternary structure, the RNAP catalytic core consists of 2 alpha, 1 beta, 1 beta' and 1 omega subunit. When a sigma factor is associated with the core the holoenzyme is formed, which can initiate transcription.

It carries out the reaction RNA(n) + a ribonucleoside 5'-triphosphate = RNA(n+1) + diphosphate. Its function is as follows. DNA-dependent RNA polymerase catalyzes the transcription of DNA into RNA using the four ribonucleoside triphosphates as substrates. This Herminiimonas arsenicoxydans protein is DNA-directed RNA polymerase subunit beta.